A 313-amino-acid chain; its full sequence is Porphobilinogen deaminase (313 aa).

S-(dipyrrolylmethanemethyl)cysteine is present on cysteine 242.

Belongs to the HMBS family. In terms of assembly, monomer. The cofactor is dipyrromethane.

The enzyme catalyses 4 porphobilinogen + H2O = hydroxymethylbilane + 4 NH4(+). The protein operates within porphyrin-containing compound metabolism; protoporphyrin-IX biosynthesis; coproporphyrinogen-III from 5-aminolevulinate: step 2/4. Tetrapolymerization of the monopyrrole PBG into the hydroxymethylbilane pre-uroporphyrinogen in several discrete steps. The polypeptide is Porphobilinogen deaminase (Salmonella arizonae (strain ATCC BAA-731 / CDC346-86 / RSK2980)).